A 157-amino-acid chain; its full sequence is Nicotinate dehydrogenase small FeS subunit (157 aa).

A 2Fe-2S ferredoxin-type domain is found at 4–80; that stretch reads ITINLNLNGE…ESTIITLEGV (77 aa). 8 residues coordinate [2Fe-2S] cluster: Cys42, Cys47, Cys50, Cys62, Cys101, Cys104, Cys136, and Cys138.

In terms of assembly, heterooctamer of NDHM, NDHL, NDHS and NDHF. Dimer of heterotetramers. Requires [2Fe-2S] cluster as cofactor.

The enzyme catalyses nicotinate + NADP(+) + H2O = 6-hydroxynicotinate + NADPH + H(+). It participates in cofactor degradation; nicotinate degradation; 6-hydroxynicotinate from nicotinate: step 1/1. With respect to regulation, reversibly inactivated by selenide and sulfide. Not inhibited by cyanide. Its function is as follows. Catalyzes the hydroxylation of nicotinate to 6-hydroxynicotinate. Also active against 2-pyrazinecarboxylic acid, but inactive against other nicotinate analogs. In Eubacterium barkeri (Clostridium barkeri), this protein is Nicotinate dehydrogenase small FeS subunit (ndhS).